Here is a 101-residue protein sequence, read N- to C-terminus: Small ribosomal subunit protein uS14 (101 aa).

The protein belongs to the universal ribosomal protein uS14 family. In terms of assembly, part of the 30S ribosomal subunit. Contacts proteins S3 and S10.

In terms of biological role, binds 16S rRNA, required for the assembly of 30S particles and may also be responsible for determining the conformation of the 16S rRNA at the A site. The protein is Small ribosomal subunit protein uS14 of Synechococcus sp. (strain JA-3-3Ab) (Cyanobacteria bacterium Yellowstone A-Prime).